The chain runs to 613 residues: MVLNSTPPASPGAEAQQRPPRYPGEDTAPTSRKEIWGWYAYGIAAEVFAVCGVGSFLPLTLEQLARERGTLLSSHLPCVGSSSPSTAPGNGTTTATLRRDGTDNDQCVVSVLGLQVNTASFAMYTFSLAVLVQALTLISFSALADYENNRKTLLLAFGFIGSMTSMLFIFIAPPVYILGSLLVVIGVTCLGSSFVVLNSFLPVLVANDPSIQTAHKEEGEELSPVNSSGEFARSEDLDEENVRDSDDHFTTGHGLKTKAAGSASPELQLSTRISSKGVGLGYCAAVLVQILSILMLFALSKTSLPKISGTLPMRFVLLLVGIWWFSFTMVSRRWLRDRPGPPLASSKGAASNSRWRIWLRLIGFAWKSLWKTVKVAVKLREVIVFLIAWFLLSDAMATVSGTAILFARTELKMSTTAVGLLSITATLSGMAGAFLWPVVSRRLRLKSNHTIMLCIALFEVIPLYGMLAYIPLFKKWGVIGLQQPWEIFPLGIVHGLVSGGLSSYCRSFFGLLIPPGSEAAFYALYAATDKGSSFIGPAIVGMLIDATGQVRSGFFFIAVLILLPIPLIWMVNAEKGRQDGLAMADILEKSHGEHASEYGGPSEEAEGLLARDI.

Residues 1–28 (MVLNSTPPASPGAEAQQRPPRYPGEDTA) form a disordered region. The chain crosses the membrane as a helical span at residues 41–61 (YGIAAEVFAVCGVGSFLPLTL). The segment covering 80-96 (GSSSPSTAPGNGTTTAT) has biased composition (polar residues). A disordered region spans residues 80–99 (GSSSPSTAPGNGTTTATLRR). N-linked (GlcNAc...) asparagine glycosylation occurs at asparagine 90. 3 helical membrane-spanning segments follow: residues 120 to 140 (SFAM…LISF), 155 to 177 (LAFG…PVYI), and 189 to 209 (CLGS…ANDP). Residues 216–257 (KEEGEELSPVNSSGEFARSEDLDEENVRDSDDHFTTGHGLKT) are disordered. Asparagine 226 carries an N-linked (GlcNAc...) asparagine glycan. The span at 232–250 (ARSEDLDEENVRDSDDHFT) shows a compositional bias: basic and acidic residues. A run of 4 helical transmembrane segments spans residues 278-298 (VGLG…MLFA), 307-327 (ISGT…WFSF), 382-402 (VIVF…VSGT), and 418-438 (VGLL…LWPV). Asparagine 448 is a glycosylation site (N-linked (GlcNAc...) asparagine). Transmembrane regions (helical) follow at residues 453 to 473 (LCIA…IPLF), 488 to 510 (FPLG…SFFG), 522 to 544 (YALY…GMLI), and 553 to 573 (GFFF…MVNA). The interval 592–613 (GEHASEYGGPSEEAEGLLARDI) is disordered.

It belongs to the ATG22 family.

The protein localises to the vacuole membrane. Its function is as follows. Vacuolar effluxer which mediate the efflux of amino acids resulting from autophagic degradation. The release of autophagic amino acids allows the maintenance of protein synthesis and viability during nitrogen starvation. The polypeptide is Autophagy-related protein 22-2 (atg22-2) (Neosartorya fischeri (strain ATCC 1020 / DSM 3700 / CBS 544.65 / FGSC A1164 / JCM 1740 / NRRL 181 / WB 181) (Aspergillus fischerianus)).